A 185-amino-acid polypeptide reads, in one-letter code: Ethylene-responsive transcription factor ERF017 (185 aa).

A DNA-binding region (AP2/ERF) is located at residues 11–68; the sequence is KYKGVRKRKWGKWVSEIRLPNSRERIWLGSYDTPEKAARAFDAALYCLRGNNAKFNFP.

Belongs to the AP2/ERF transcription factor family. ERF subfamily.

The protein localises to the nucleus. In terms of biological role, probably acts as a transcriptional activator. Binds to the GCC-box pathogenesis-related promoter element. May be involved in the regulation of gene expression by stress factors and by components of stress signal transduction pathways. In Arabidopsis thaliana (Mouse-ear cress), this protein is Ethylene-responsive transcription factor ERF017 (ERF017).